Here is a 317-residue protein sequence, read N- to C-terminus: Adenine deaminase (317 aa).

The Zn(2+) site is built by histidine 14, histidine 16, and histidine 194. Glutamate 197 functions as the Proton donor in the catalytic mechanism. Aspartate 275 serves as a coordination point for Zn(2+). Position 276 (aspartate 276) interacts with substrate.

It belongs to the metallo-dependent hydrolases superfamily. Adenosine and AMP deaminases family. Adenine deaminase type 2 subfamily. It depends on Zn(2+) as a cofactor.

It carries out the reaction adenine + H2O + H(+) = hypoxanthine + NH4(+). Functionally, catalyzes the hydrolytic deamination of adenine to hypoxanthine. Plays an important role in the purine salvage pathway and in nitrogen catabolism. This Pseudomonas syringae pv. syringae (strain B728a) protein is Adenine deaminase.